The sequence spans 394 residues: S-adenosylmethionine synthase (394 aa).

Residue His15 coordinates ATP. A Mg(2+)-binding site is contributed by Asp17. Residue Glu43 participates in K(+) binding. Glu56 and Gln99 together coordinate L-methionine. Residues 99–109 (QSPDIALGVNK) form a flexible loop region. Residues 173-175 (DGK), 239-240 (RF), Asp248, 254-255 (RK), Ala271, and Lys275 contribute to the ATP site. Position 248 (Asp248) interacts with L-methionine. Residue Lys279 participates in L-methionine binding.

This sequence belongs to the AdoMet synthase family. Homotetramer; dimer of dimers. Mg(2+) serves as cofactor. It depends on K(+) as a cofactor.

The protein resides in the cytoplasm. It catalyses the reaction L-methionine + ATP + H2O = S-adenosyl-L-methionine + phosphate + diphosphate. The protein operates within amino-acid biosynthesis; S-adenosyl-L-methionine biosynthesis; S-adenosyl-L-methionine from L-methionine: step 1/1. In terms of biological role, catalyzes the formation of S-adenosylmethionine (AdoMet) from methionine and ATP. The overall synthetic reaction is composed of two sequential steps, AdoMet formation and the subsequent tripolyphosphate hydrolysis which occurs prior to release of AdoMet from the enzyme. The polypeptide is S-adenosylmethionine synthase (Kosmotoga olearia (strain ATCC BAA-1733 / DSM 21960 / TBF 19.5.1)).